The chain runs to 390 residues: Leucine aminopeptidase 1 (390 aa).

Residues Met-1 to Ser-18 form the signal peptide. Positions Tyr-19–Val-90 are excised as a propeptide. The N-linked (GlcNAc...) asparagine glycan is linked to Asn-120. Zn(2+) is bound by residues His-190, Asp-209, Glu-248, and Asp-275. Cys-324 and Cys-328 are disulfide-bonded. A Zn(2+)-binding site is contributed by His-357.

The protein belongs to the peptidase M28 family. M28E subfamily. In terms of assembly, monomer. Requires Zn(2+) as cofactor.

It localises to the secreted. In terms of biological role, extracellular aminopeptidase that allows assimilation of proteinaceous substrates. The protein is Leucine aminopeptidase 1 (lap1) of Emericella nidulans (strain FGSC A4 / ATCC 38163 / CBS 112.46 / NRRL 194 / M139) (Aspergillus nidulans).